A 566-amino-acid polypeptide reads, in one-letter code: MKTKQEKKARPGSIMRLLWSSHPWLTFFTLLTGLISGVASIAVVNVINQAIHEETFQRQSLFWFVGLSVVALLFRNGASLFPAYASMRIMTRLRIALCRKILGTPLEEVDRRGAPNVLTLLTSDIPQLNATLLIMPTILVESAVFLFGIAYLAYLSWVVFAITISLMILGVAMYLLFFMGGMKFTHKVRDEFTAFNEYTHALVFGLKELKLNGIRRRWFSRSAIQESSVRVAKYNYIERLWFTAAENVGQLTLSLLVGCLLFAAPMFAVIDAKTMSASVLAVLYIMGPLVMLVSAMPMLAQGRIACTRLADFGFSINEPHPEPETSDADNVLLLDHKKSWGSIQLKNVHMNYKDPQSSSGFALGPIDLTIHSGELVYIVGGNGCGKSTLAKVFCGLYIPQEGQLLLDGAAVTDDSRGDYRDLFSAVFSDFHLFNRLIGPDEKEHPSTDQAQTYLSTLGLEDKVKIEGLGYSTTTALSYGQQKRLALVCAYLEDRPIYLLDEWAADQDPPFKRFFYEELLPDLKRRGKTILIITHDDQYFQLADRIIKLADGCIVSDVKCAVEGKRA.

Residues 22-301 (HPWLTFFTLL…LVSAMPMLAQ (280 aa)) form the ABC transmembrane type-1 domain. A run of 6 helical transmembrane segments spans residues 24 to 44 (WLTFFTLLTGLISGVASIAVV), 61 to 81 (LFWFVGLSVVALLFRNGASLF), 132 to 152 (LLIMPTILVESAVFLFGIAYL), 158 to 178 (VVFAITISLMILGVAMYLLFF), 250 to 270 (QLTLSLLVGCLLFAAPMFAVI), and 279 to 299 (VLAVLYIMGPLVMLVSAMPML). Residues 343-566 (IQLKNVHMNY…VKCAVEGKRA (224 aa)) enclose the ABC transporter domain. 380 to 387 (GGNGCGKS) lines the ATP pocket.

This sequence belongs to the ABC transporter superfamily. Dimer.

The protein localises to the cell inner membrane. ATP-driven efflux pump necessary for the secretion of syringomycin. May specifically bind syringomycin and translocate it to the periplasmic space. SyrD is also required for full expression of the syrB gene. The protein is ATP-binding protein SyrD (syrD) of Pseudomonas syringae pv. syringae.